We begin with the raw amino-acid sequence, 123 residues long: Fluoride-specific ion channel FluC (123 aa).

The next 4 helical transmembrane spans lie at 5-25 (LIIGIGGFIGAILRYVISGII), 29-49 (FGIPTGTFIVNLIGSFIVGFV), 65-85 (LIITGFCGALTTFSTFSYETF), and 94-114 (IKFLTNIFINVMGCLIMIYVG). Positions 72 and 75 each coordinate Na(+).

This sequence belongs to the fluoride channel Fluc/FEX (TC 1.A.43) family.

Its subcellular location is the cell membrane. It carries out the reaction fluoride(in) = fluoride(out). Na(+) is not transported, but it plays an essential structural role and its presence is essential for fluoride channel function. Its function is as follows. Fluoride-specific ion channel. Important for reducing fluoride concentration in the cell, thus reducing its toxicity. The chain is Fluoride-specific ion channel FluC from Methanococcus aeolicus (strain ATCC BAA-1280 / DSM 17508 / OCM 812 / Nankai-3).